Reading from the N-terminus, the 906-residue chain is MLKLSTNEIRKKWIEFFESKDHLFIEPKSLIPKNDPTLLWINSGVSTLKDYFSGKVKPPHKRLVNSQKAIRTNDIFNVGLTSRHHTFFEMLGNFSIGDYFKKEAIDWAYEFLINVLKIDVKKLWVTVFEDDQFTNDEWIKLGIIKEQIIKCNRDRNFWDVGNGPCGPCTEIHYDRGERFDPNKIGSKLILEDIENDRYVEIWNIVFSQFNNDGHNNYTELLQKNIDTGAGLERIACISQDVPTNFDSDVFMRITKSVEQFSEYKYDMNEYFHPNVTQNKINFAYKVIADHMRATVFAIADGAIPSNKERGYILRRLIRRTMVLVRRLNINNLLWVDAVVDAIASTMGDFYTYLKDEKTLTKIKMILNKEVQLFEKTLQLGLNIFENSIRNQELDKEITFKLVDTYGFPIELIKEICEQRNVKVDLEAFDAMFKHHQLISKANKANLKVMESQNESLMQLDVDSTFHYEIFRWENAKIITLFNEDFELVDGLDHEDGYVVFDNTCFYATSGGQQHDTGYIIKNDQQFFVDDVFKAPNRQHVHHVKNASLSMNEHVILQINEQDRKSITANHTAEHLLHYCLKHVLSPDIKQEGAAKYPHKVTFDFTYHAQPTKAQLDKLENVLNEMVQSNFDVQELHMDLDEAKAVGAAAYFEDVYKKLKGKLRVIKMGPSIELCGGTHAHHTSEIERIKIVECASKGAGSWRITMVTGHDNLAKYIHDLYVDYLNEINHLKVNLDINDHKLNDLYNAFANWKNLSIDDYDLLNEKFAELKQSLINFKIEFDKQNAKQAIIDIKNTFNTQLTNKRVHVFKNTDNKNIFNALNELINENQDTLFISFNLDDNKIQYLLAINEKFATTNQINLNKYIKELNTISNGKGGGKPYFVQGGTSEQEKLDELLTVVDKWVINA.

Zn(2+)-binding residues include His-570, His-574, Cys-674, and His-678.

It belongs to the class-II aminoacyl-tRNA synthetase family. Zn(2+) is required as a cofactor.

It is found in the cytoplasm. The enzyme catalyses tRNA(Ala) + L-alanine + ATP = L-alanyl-tRNA(Ala) + AMP + diphosphate. Functionally, catalyzes the attachment of alanine to tRNA(Ala) in a two-step reaction: alanine is first activated by ATP to form Ala-AMP and then transferred to the acceptor end of tRNA(Ala). Also edits incorrectly charged Ser-tRNA(Ala) and Gly-tRNA(Ala) via its editing domain. The chain is Alanine--tRNA ligase from Ureaplasma parvum serovar 3 (strain ATCC 27815 / 27 / NCTC 11736).